A 279-amino-acid polypeptide reads, in one-letter code: Thymidylate synthase (279 aa).

141–142 contributes to the dUMP binding site; the sequence is RR. Catalysis depends on Cys-161, which acts as the Nucleophile. Residues 181–184, Asn-192, and 222–224 each bind dUMP; these read RSND and HVY. Asp-184 is a binding site for (6R)-5,10-methylene-5,6,7,8-tetrahydrofolate. Ala-278 is a (6R)-5,10-methylene-5,6,7,8-tetrahydrofolate binding site.

The protein belongs to the thymidylate synthase family. Bacterial-type ThyA subfamily. As to quaternary structure, homodimer.

The protein localises to the cytoplasm. It catalyses the reaction dUMP + (6R)-5,10-methylene-5,6,7,8-tetrahydrofolate = 7,8-dihydrofolate + dTMP. It participates in pyrimidine metabolism; dTTP biosynthesis. Catalyzes the reductive methylation of 2'-deoxyuridine-5'-monophosphate (dUMP) to 2'-deoxythymidine-5'-monophosphate (dTMP) while utilizing 5,10-methylenetetrahydrofolate (mTHF) as the methyl donor and reductant in the reaction, yielding dihydrofolate (DHF) as a by-product. This enzymatic reaction provides an intracellular de novo source of dTMP, an essential precursor for DNA biosynthesis. This is Thymidylate synthase from Bacillus subtilis subsp. natto.